The following is a 124-amino-acid chain: MKHTFLQVALGGALGSAARYGVNILAGRLTPGFPLGTLSVNIAGCLAMGLLAALLAHRGGQHLAPFLLTGMLGGFTTFSAFALDTMTLWERGEIATALGYVLGSVVLSLAAVIAGLTVGRGLFA.

Helical transmembrane passes span 5–25, 35–55, 63–83, and 98–118; these read FLQV…VNIL, LGTL…AALL, LAPF…AFAL, and LGYV…GLTV. Residues glycine 73 and threonine 76 each contribute to the Na(+) site.

This sequence belongs to the fluoride channel Fluc/FEX (TC 1.A.43) family.

It localises to the cell inner membrane. It catalyses the reaction fluoride(in) = fluoride(out). With respect to regulation, na(+) is not transported, but it plays an essential structural role and its presence is essential for fluoride channel function. Its function is as follows. Fluoride-specific ion channel. Important for reducing fluoride concentration in the cell, thus reducing its toxicity. This Paracoccus denitrificans (strain Pd 1222) protein is Fluoride-specific ion channel FluC.